The chain runs to 418 residues: Gamma-glutamyl phosphate reductase (418 aa).

The protein belongs to the gamma-glutamyl phosphate reductase family.

Its subcellular location is the cytoplasm. The enzyme catalyses L-glutamate 5-semialdehyde + phosphate + NADP(+) = L-glutamyl 5-phosphate + NADPH + H(+). It participates in amino-acid biosynthesis; L-proline biosynthesis; L-glutamate 5-semialdehyde from L-glutamate: step 2/2. Its function is as follows. Catalyzes the NADPH-dependent reduction of L-glutamate 5-phosphate into L-glutamate 5-semialdehyde and phosphate. The product spontaneously undergoes cyclization to form 1-pyrroline-5-carboxylate. The chain is Gamma-glutamyl phosphate reductase from Trichlorobacter lovleyi (strain ATCC BAA-1151 / DSM 17278 / SZ) (Geobacter lovleyi).